A 1465-amino-acid polypeptide reads, in one-letter code: DNA polymerase III PolC-type (1465 aa).

The 157-residue stretch at 427–583 (YVVFDVETTG…YDAEATGRLL (157 aa)) folds into the Exonuclease domain.

The protein belongs to the DNA polymerase type-C family. PolC subfamily.

The protein localises to the cytoplasm. The catalysed reaction is DNA(n) + a 2'-deoxyribonucleoside 5'-triphosphate = DNA(n+1) + diphosphate. In terms of biological role, required for replicative DNA synthesis. This DNA polymerase also exhibits 3' to 5' exonuclease activity. The sequence is that of DNA polymerase III PolC-type from Streptococcus pyogenes serotype M12 (strain MGAS2096).